The following is a 263-amino-acid chain: Uridylate kinase (263 aa).

29 to 32 (KVSG) is a binding site for ATP. A UMP-binding site is contributed by glycine 71. The ATP site is built by glycine 72 and arginine 76. Residues aspartate 91 and 152–159 (TGNPFFTT) each bind UMP. Threonine 179, glutamine 180, tyrosine 185, and aspartate 188 together coordinate ATP.

Belongs to the UMP kinase family. In terms of assembly, homohexamer.

It localises to the cytoplasm. The enzyme catalyses UMP + ATP = UDP + ADP. It participates in pyrimidine metabolism; CTP biosynthesis via de novo pathway; UDP from UMP (UMPK route): step 1/1. Its activity is regulated as follows. Inhibited by UTP. Its function is as follows. Catalyzes the reversible phosphorylation of UMP to UDP. This Maricaulis maris (strain MCS10) (Caulobacter maris) protein is Uridylate kinase.